The primary structure comprises 266 residues: tRNA (guanine-N(1)-)-methyltransferase (266 aa).

Residues Gly113 and 137 to 142 (LGDYVL) each bind S-adenosyl-L-methionine.

Belongs to the RNA methyltransferase TrmD family. As to quaternary structure, homodimer.

It localises to the cytoplasm. The enzyme catalyses guanosine(37) in tRNA + S-adenosyl-L-methionine = N(1)-methylguanosine(37) in tRNA + S-adenosyl-L-homocysteine + H(+). In terms of biological role, specifically methylates guanosine-37 in various tRNAs. The chain is tRNA (guanine-N(1)-)-methyltransferase from Paenarthrobacter aurescens (strain TC1).